Reading from the N-terminus, the 287-residue chain is 2-dehydro-3-deoxyphosphooctonate aldolase (287 aa).

It belongs to the KdsA family.

It is found in the cytoplasm. The catalysed reaction is D-arabinose 5-phosphate + phosphoenolpyruvate + H2O = 3-deoxy-alpha-D-manno-2-octulosonate-8-phosphate + phosphate. The protein operates within carbohydrate biosynthesis; 3-deoxy-D-manno-octulosonate biosynthesis; 3-deoxy-D-manno-octulosonate from D-ribulose 5-phosphate: step 2/3. It participates in bacterial outer membrane biogenesis; lipopolysaccharide biosynthesis. The protein is 2-dehydro-3-deoxyphosphooctonate aldolase of Rhodopseudomonas palustris (strain ATCC BAA-98 / CGA009).